The sequence spans 214 residues: Transcriptional activator protein ExaE (214 aa).

The 117-residue stretch at 2–118 (GILLVDDHPM…VVLEAVRRVL (117 aa)) folds into the Response regulatory domain. Asp-53 is subject to 4-aspartylphosphate. The region spanning 143-208 (GNARLQGLTQ…ELVHLAIEAG (66 aa)) is the HTH luxR-type domain. A DNA-binding region (H-T-H motif) is located at residues 167–186 (TRLIAQQLCISAKTVSNYLT).

In terms of biological role, positive regulator of the expression of the gene qedA and the activity of ADH I but does not affect the activities of ADH IIB or ADH IIG. In Pseudomonas putida (Arthrobacter siderocapsulatus), this protein is Transcriptional activator protein ExaE.